The following is a 179-amino-acid chain: Large ribosomal subunit protein uL5 (179 aa).

Belongs to the universal ribosomal protein uL5 family. In terms of assembly, part of the 50S ribosomal subunit; part of the 5S rRNA/L5/L18/L25 subcomplex. Contacts the 5S rRNA and the P site tRNA. Forms a bridge to the 30S subunit in the 70S ribosome.

Its function is as follows. This is one of the proteins that bind and probably mediate the attachment of the 5S RNA into the large ribosomal subunit, where it forms part of the central protuberance. In the 70S ribosome it contacts protein S13 of the 30S subunit (bridge B1b), connecting the 2 subunits; this bridge is implicated in subunit movement. Contacts the P site tRNA; the 5S rRNA and some of its associated proteins might help stabilize positioning of ribosome-bound tRNAs. The sequence is that of Large ribosomal subunit protein uL5 from Glaesserella parasuis serovar 5 (strain SH0165) (Haemophilus parasuis).